The sequence spans 425 residues: Enolase (425 aa).

Glutamine 162 contacts (2R)-2-phosphoglycerate. Catalysis depends on glutamate 204, which acts as the Proton donor. Residues aspartate 241, glutamate 282, and aspartate 309 each coordinate Mg(2+). Residues lysine 334, arginine 363, serine 364, and lysine 385 each coordinate (2R)-2-phosphoglycerate. The active-site Proton acceptor is lysine 334.

It belongs to the enolase family. The cofactor is Mg(2+).

Its subcellular location is the cytoplasm. The protein localises to the secreted. The protein resides in the cell surface. The catalysed reaction is (2R)-2-phosphoglycerate = phosphoenolpyruvate + H2O. It functions in the pathway carbohydrate degradation; glycolysis; pyruvate from D-glyceraldehyde 3-phosphate: step 4/5. Functionally, catalyzes the reversible conversion of 2-phosphoglycerate (2-PG) into phosphoenolpyruvate (PEP). It is essential for the degradation of carbohydrates via glycolysis. This is Enolase from Corynebacterium urealyticum (strain ATCC 43042 / DSM 7109).